The chain runs to 131 residues: Large ribosomal subunit protein eL32 (131 aa).

Belongs to the eukaryotic ribosomal protein eL32 family.

This Sulfurisphaera tokodaii (strain DSM 16993 / JCM 10545 / NBRC 100140 / 7) (Sulfolobus tokodaii) protein is Large ribosomal subunit protein eL32 (rpl32e).